The primary structure comprises 458 residues: Gamma aminobutyrate transaminase 2 (458 aa).

Residue 114–115 (GS) coordinates pyridoxal 5'-phosphate. Substrate is bound at residue Tyr-147. Position 254 (Asp-254) interacts with pyridoxal 5'-phosphate. Residue Lys-283 participates in substrate binding. The residue at position 283 (Lys-283) is an N6-(pyridoxal phosphate)lysine.

The protein belongs to the class-III pyridoxal-phosphate-dependent aminotransferase family. In terms of tissue distribution, expressed in leaves, roots, stems, flowers and fruits. Expressed in carpels, but not in stamens.

It localises to the cytoplasm. The enzyme catalyses 4-aminobutanoate + pyruvate = succinate semialdehyde + L-alanine. It catalyses the reaction 4-aminobutanoate + glyoxylate = succinate semialdehyde + glycine. In terms of biological role, transaminase that degrades gamma-amino butyric acid (GABA) and uses pyruvate or glyoxylate as amino-group acceptor. Cannot use beta-alanine, ornithine, acetylornithine, serine, glycine, asparagine, glutamine, glutamate, valine, leucine, isoleucine, methionine, phenylalanine, histidine, lysine, arginine, aspartate, threonine, tyrosine, tryptophan, proline, or cysteine as amino donors. May be responsible for establishing the GABA gradient in the carpel. In Solanum lycopersicum (Tomato), this protein is Gamma aminobutyrate transaminase 2 (GABA-TP2).